The primary structure comprises 219 residues: Transmembrane protein 125 (219 aa).

The next 4 helical transmembrane spans lie at 36-56 (LCFAVAVGLVAGCGAGGVALL), 68-88 (LAVGTALCLLALLVLVKQLMS), 114-134 (ALVVLLSGLVLLVTGLTLAGL), and 147-167 (MLSVGITLAASGALLLLGLLL).

It localises to the membrane. The protein is Transmembrane protein 125 (TMEM125) of Bos taurus (Bovine).